Here is a 253-residue protein sequence, read N- to C-terminus: GTP cyclohydrolase III (253 aa).

This sequence belongs to the archaeal-type GTP cyclohydrolase family.

It catalyses the reaction GTP + 3 H2O = 2-amino-5-formylamino-6-(5-phospho-D-ribosylamino)pyrimidin-4(3H)-one + 2 phosphate + 2 H(+). Its function is as follows. Catalyzes the formation of 2-amino-5-formylamino-6-ribofuranosylamino-4(3H)-pyrimidinone ribonucleotide monophosphate and inorganic phosphate from GTP. Also has an independent pyrophosphate phosphohydrolase activity. The polypeptide is GTP cyclohydrolase III (Natronomonas pharaonis (strain ATCC 35678 / DSM 2160 / CIP 103997 / JCM 8858 / NBRC 14720 / NCIMB 2260 / Gabara) (Halobacterium pharaonis)).